Here is a 181-residue protein sequence, read N- to C-terminus: Putative J domain-containing protein R266 (181 aa).

Positions 6–70 (NYYQILDVDN…LKRLNYDSYL (65 aa)) constitute a J domain.

In Acanthamoeba polyphaga (Amoeba), this protein is Putative J domain-containing protein R266.